The sequence spans 447 residues: Dirigent protein 10 (447 aa).

A signal peptide spans M1–A21. The span at S74 to T85 shows a compositional bias: gly residues. Residues S74–T123 form a disordered region. Positions G86–S107 are enriched in low complexity.

This sequence belongs to the plant dirigent protein family. Homodimer. In roots, mostly detected in root endodermis and quiescent center, and, to a lower extent, in root stele and cortex. Expressed in root vascular cylinder, flowers, siliques, cotyledon and leaf veins, and leaf margins. Present in the basal region of rosette leaf trichomes and in developing xylem.

Its subcellular location is the secreted. The protein resides in the extracellular space. The protein localises to the apoplast. In terms of biological role, dirigent proteins impart stereoselectivity on the phenoxy radical-coupling reaction, yielding optically active lignans from two molecules of coniferyl alcohol in the biosynthesis of lignans, flavonolignans, and alkaloids and thus plays a central role in plant secondary metabolism. Regulates suberin accumulation in roots. The sequence is that of Dirigent protein 10 (DIR10) from Arabidopsis thaliana (Mouse-ear cress).